The following is a 376-amino-acid chain: Putative glutamate--cysteine ligase 2-1 (376 aa).

This sequence belongs to the glutamate--cysteine ligase type 2 family. YbdK subfamily.

The enzyme catalyses L-cysteine + L-glutamate + ATP = gamma-L-glutamyl-L-cysteine + ADP + phosphate + H(+). Its function is as follows. ATP-dependent carboxylate-amine ligase which exhibits weak glutamate--cysteine ligase activity. The polypeptide is Putative glutamate--cysteine ligase 2-1 (Mycobacterium sp. (strain JLS)).